A 59-amino-acid chain; its full sequence is MKTKSAAVKRFKLTKSGQIKRKHAYTSHLAPHKSTKQKRHLRKQATVSNSELKRIGILI.

A compositionally biased stretch (basic residues) spans glycine 17–lysine 43. The tract at residues glycine 17–valine 47 is disordered.

Belongs to the bacterial ribosomal protein bL35 family.

This chain is Large ribosomal subunit protein bL35, found in Mycoplasma genitalium (strain ATCC 33530 / DSM 19775 / NCTC 10195 / G37) (Mycoplasmoides genitalium).